The sequence spans 369 residues: Choline-phosphate cytidylyltransferase B (369 aa).

The segment at 1 to 27 (MPVLTTDAESETGIPKSLSNEPPSETM) is disordered. CTP is bound by residues Ile84, Phe85, His92, and Lys122. Residues Lys122 and Trp151 each coordinate phosphocholine. CTP-binding residues include His168, Asp169, Tyr173, Gln195, Arg196, Thr197, and Ile200. The tract at residues 309–369 (RMLQALSPKQ…SMSEGDEDEK (61 aa)) is disordered. 7 positions are modified to phosphoserine: Ser315, Ser319, Ser322, Ser323, Ser329, Ser331, and Ser335. The segment covering 319 to 339 (SPVSSPTRSRSPSRSPSPTFS) has biased composition (low complexity). Phosphothreonine is present on Thr345. Residues Ser346, Ser349, Ser350, Ser355, Ser360, and Ser362 each carry the phosphoserine modification. Positions 351 to 362 (PKAASASISSMS) are enriched in low complexity.

The protein belongs to the cytidylyltransferase family. Homodimer. In terms of tissue distribution, highly expressed in brain (at protein level). Expressed in liver (at protein level). Expressed at lower levels in lung and gonads. As to expression, expressed in brain (at protein level). Expressed at lower levels in lung and gonads.

The protein resides in the endoplasmic reticulum. The protein localises to the cytoplasm. The enzyme catalyses phosphocholine + CTP + H(+) = CDP-choline + diphosphate. It participates in phospholipid metabolism; phosphatidylcholine biosynthesis; phosphatidylcholine from phosphocholine: step 1/2. Functionally, catalyzes the key rate-limiting step in the CDP-choline pathway for phosphatidylcholine biosynthesis. Plays an important role in ovary maturation and the maintenance of sperm production. Its function is as follows. Catalyzes the key rate-limiting step in the CDP-choline pathway for phosphatidylcholine biosynthesis. In Mus musculus (Mouse), this protein is Choline-phosphate cytidylyltransferase B (Pcyt1b).